A 370-amino-acid chain; its full sequence is MDAEIKHRNSDKTFKFVTPPADSSIEVLNDFYWTDTDEPHVARRKMILQKYPEVTKLTGHEPKTKWYVMGVVLLQLGIAYYLRHTPVFSWKFLTLAYVIGATANQAIFLAIHELSHNLLFRKPLHNKLFAVFANIPIGVPYSASFQPYHQLHHKFLGDMYLDTDLPTEYEGRFLSSMPGKLFFAIFQIFFYALRPMFITQIKFTYVHLVNVVFQLIFDHVMVTCWGWKALGYFIVSTFLAGSLHPCAGHFIAEHYVLNENNVPRHQKIGGTNISKELLPAETYSYYGTLNMLTWNVGYHNEHHDFPYIAWTRLPELRRIAAEFYDPLPQVTSWCGVIWWFIFNDVNTVWNRVKREGKEKHGYRINRLDEN.

A run of 3 helical transmembrane segments spans residues 68 to 88, 92 to 112, and 128 to 148; these read VMGVVLLQLGIAYYLRHTPVF, FLTLAYVIGATANQAIFLAIH, and LFAVFANIPIGVPYSASFQPY. Positions 112 to 116 match the Histidine box-1 motif; the sequence is HELSH. A Histidine box-2 motif is present at residues 149-153; that stretch reads HQLHH. 3 consecutive transmembrane segments (helical) span residues 173–193, 197–217, and 220–240; these read FLSSMPGKLFFAIFQIFFYAL, FITQIKFTYVHLVNVVFQLIF, and VMVTCWGWKALGYFIVSTFLA. The short motif at 299–303 is the Histidine box-3 element; the sequence is HNEHH.

The protein belongs to the fatty acid desaturase type 1 family. DEGS subfamily.

It localises to the membrane. It carries out the reaction an N-acylsphinganine + 2 Fe(II)-[cytochrome b5] + O2 + 2 H(+) = an N-acylsphing-4-enine + 2 Fe(III)-[cytochrome b5] + 2 H2O. The protein operates within lipid metabolism; sphingolipid metabolism. Its function is as follows. Delta(4)-fatty-acid desaturase which introduces a double bond at the 4-position in the long-chain base (LCB) of ceramides. Required for the formation of the monounsaturated sphingoid base (E)-sphing-4-enine during glucosylceramide (GluCer) biosynthesis. The protein is Sphingolipid delta(4)-desaturase of Candida albicans (strain SC5314 / ATCC MYA-2876) (Yeast).